The following is a 420-amino-acid chain: Replication factor C large subunit (420 aa).

46–53 (GVQGSGKT) contributes to the ATP binding site.

Belongs to the activator 1 small subunits family. RfcL subfamily. As to quaternary structure, heteromultimer composed of small subunits (RfcS) and large subunits (RfcL).

Functionally, part of the RFC clamp loader complex which loads the PCNA sliding clamp onto DNA. This Thermoplasma volcanium (strain ATCC 51530 / DSM 4299 / JCM 9571 / NBRC 15438 / GSS1) protein is Replication factor C large subunit.